We begin with the raw amino-acid sequence, 157 residues long: Protein Smg homolog (157 aa).

This sequence belongs to the Smg family.

The protein is Protein Smg homolog of Xanthomonas euvesicatoria pv. vesicatoria (strain 85-10) (Xanthomonas campestris pv. vesicatoria).